Here is a 158-residue protein sequence, read N- to C-terminus: Large ribosomal subunit protein uL16 (158 aa).

This sequence belongs to the universal ribosomal protein uL16 family. In terms of assembly, part of the 50S ribosomal subunit.

Functionally, binds 23S rRNA and is also seen to make contacts with the A and possibly P site tRNAs. This Prochlorococcus marinus (strain MIT 9303) protein is Large ribosomal subunit protein uL16.